A 240-amino-acid polypeptide reads, in one-letter code: MYKILRLIQENQQITSHDDLENVLNGLNNLIGHEFFLFGLSFQPTLKTSETLVTDNYPNSWRQQYDESGFMHIDPIVKYSITNFLPIRWDDAKRVNNDGRVIFEEARCNGLKAGFSIPIHGLRGEFGMISFATSDTKSYDLNQQSIHTSQLIVPLLAHNIGNITRYHKDAKPRAVLTAREVQCLAWAAEGKSAWEIATIINTSERTVKFHFSNACKKLGATNRYQAITKAILGGYINPYL.

Residues 169 to 234 (DAKPRAVLTA…QAITKAILGG (66 aa)) form the HTH luxR-type domain. Residues 193-212 (AWEIATIINTSERTVKFHFS) constitute a DNA-binding region (H-T-H motif).

This sequence belongs to the autoinducer-regulated transcriptional regulatory protein family.

Its function is as follows. Probable transcriptional activator. Binds to autoinducer molecule ODHL. The chain is Transcriptional activator protein VanR (vanR) from Vibrio anguillarum (Listonella anguillarum).